A 596-amino-acid chain; its full sequence is uncharacterized protein (596 aa).

One can recognise a Helicase ATP-binding domain in the interval 44-203 (KYLASQPRDF…PFVTYALDAD (160 aa)). Residues 285–432 (RLRQLRTHVP…PHRESTDNPL (148 aa)) form the Helicase C-terminal domain. 2 disordered regions span residues 420 to 444 (LGKPHRESTDNPLGGNPATMTQTEQ) and 506 to 533 (EQLQKRTAAQQASSTPDRTSGAPASVHG). Residues 510-523 (KRTAAQQASSTPDR) show a composition bias toward polar residues.

It to M.tuberculosis Rv2917.

This is an uncharacterized protein from Mycobacterium leprae (strain TN).